The following is a 438-amino-acid chain: Thymidine phosphorylase (438 aa).

The protein belongs to the thymidine/pyrimidine-nucleoside phosphorylase family. Homodimer.

The enzyme catalyses thymidine + phosphate = 2-deoxy-alpha-D-ribose 1-phosphate + thymine. The protein operates within pyrimidine metabolism; dTMP biosynthesis via salvage pathway; dTMP from thymine: step 1/2. The enzymes which catalyze the reversible phosphorolysis of pyrimidine nucleosides are involved in the degradation of these compounds and in their utilization as carbon and energy sources, or in the rescue of pyrimidine bases for nucleotide synthesis. This Colwellia psychrerythraea (strain 34H / ATCC BAA-681) (Vibrio psychroerythus) protein is Thymidine phosphorylase.